We begin with the raw amino-acid sequence, 300 residues long: Very-long-chain enoyl-CoA reductase (300 aa).

The chain crosses the membrane as a helical span at residues 91 to 111 (SLVFICEYAGPLFVYPIFYFL). Residue Asn-163 is glycosylated (N-linked (GlcNAc...) asparagine). The chain crosses the membrane as a helical span at residues 191–211 (VYLGLGLWIIGEVFNYICHIQ). Asn-238 is a glycosylation site (N-linked (GlcNAc...) asparagine). Residues 243–263 (ILSWIGFSILTQTLTSWIFAL) traverse the membrane as a helical segment.

The protein belongs to the steroid 5-alpha reductase family.

It localises to the endoplasmic reticulum membrane. It carries out the reaction a very-long-chain 2,3-saturated fatty acyl-CoA + NADP(+) = a very-long-chain (2E)-enoyl-CoA + NADPH + H(+). Its pathway is lipid metabolism; fatty acid biosynthesis. Catalyzes the last of the four reactions of the long-chain fatty acids elongation cycle. This endoplasmic reticulum-bound enzymatic process, allows the addition of 2 carbons to the chain of long- and very long-chain fatty acids/VLCFAs per cycle. This enzyme reduces the trans-2,3-enoyl-CoA fatty acid intermediate to an acyl-CoA that can be further elongated by entering a new cycle of elongation. Thereby, it participates in the production of VLCFAs of different chain lengths that are involved in multiple biological processes as precursors of membrane lipids and lipid mediators. This Dictyostelium discoideum (Social amoeba) protein is Very-long-chain enoyl-CoA reductase (gpsn2).